We begin with the raw amino-acid sequence, 364 residues long: MSHNSFGHLFRVTTWGESHGLALGCVVDGCPPGITFTEAEIQSFLDKRKPGQSKYTTQRREPDQVRVLSGVLLGEDGVTMTTTGTPISMMIENTDQRSKDYGEIARQYRPGHADYAYDVKYGIRDYRGGGRSSARETAARVAAGAIARKVVPGLEVRGALVSIGAHDIDRSRWNWAEVDNNPFFTPDAGSVEVFADYLDGIRKNGSSVGAIIEIVAEGVPAGIGAPIYGKLDQDIASYLMSINAVKGVEIGNGFEAARLTGEENADEMRMGNDGKPIFLSNHAGGVLGGIATGAPVVARFAVKPTSSILTPRRSIDKDGNEVDVMTRGRHDPCVGIRAVPIGEAMVACAIADHYLRHRGQTGRV.

Arginine 48 lines the NADP(+) pocket. Residues 131–133 (RSS), 243–244 (NA), glycine 288, 303–307 (KPTSS), and arginine 329 contribute to the FMN site.

It belongs to the chorismate synthase family. Homotetramer. The cofactor is FMNH2.

It catalyses the reaction 5-O-(1-carboxyvinyl)-3-phosphoshikimate = chorismate + phosphate. It participates in metabolic intermediate biosynthesis; chorismate biosynthesis; chorismate from D-erythrose 4-phosphate and phosphoenolpyruvate: step 7/7. Catalyzes the anti-1,4-elimination of the C-3 phosphate and the C-6 proR hydrogen from 5-enolpyruvylshikimate-3-phosphate (EPSP) to yield chorismate, which is the branch point compound that serves as the starting substrate for the three terminal pathways of aromatic amino acid biosynthesis. This reaction introduces a second double bond into the aromatic ring system. The protein is Chorismate synthase of Brucella abortus (strain S19).